The following is a 181-amino-acid chain: Photosystem I assembly protein Ycf4 (181 aa).

Helical transmembrane passes span 19–39 and 62–82; these read YFWA…GISS and VMMF…LTII.

The protein belongs to the Ycf4 family.

Its subcellular location is the plastid. It is found in the chloroplast thylakoid membrane. Its function is as follows. Seems to be required for the assembly of the photosystem I complex. The chain is Photosystem I assembly protein Ycf4 from Phaeodactylum tricornutum (strain CCAP 1055/1).